Here is a 276-residue protein sequence, read N- to C-terminus: Large ribosomal subunit protein uL2 (276 aa).

The segment at 212 to 276 (NRHRGIRPQT…KLIISRKKHK (65 aa)) is disordered. Basic residues predominate over residues 257–276 (YKTRKKKASDKLIISRKKHK).

The protein belongs to the universal ribosomal protein uL2 family. Part of the 50S ribosomal subunit. Forms a bridge to the 30S subunit in the 70S ribosome.

In terms of biological role, one of the primary rRNA binding proteins. Required for association of the 30S and 50S subunits to form the 70S ribosome, for tRNA binding and peptide bond formation. It has been suggested to have peptidyltransferase activity; this is somewhat controversial. Makes several contacts with the 16S rRNA in the 70S ribosome. This is Large ribosomal subunit protein uL2 from Helicobacter pylori (strain P12).